We begin with the raw amino-acid sequence, 307 residues long: tRNA dimethylallyltransferase (307 aa).

9-16 is a binding site for ATP; the sequence is GPTAVGKT. 11–16 serves as a coordination point for substrate; sequence TAVGKT. An interaction with substrate tRNA region spans residues 34 to 37; sequence DSMQ.

Belongs to the IPP transferase family. Monomer. Mg(2+) is required as a cofactor.

It catalyses the reaction adenosine(37) in tRNA + dimethylallyl diphosphate = N(6)-dimethylallyladenosine(37) in tRNA + diphosphate. Catalyzes the transfer of a dimethylallyl group onto the adenine at position 37 in tRNAs that read codons beginning with uridine, leading to the formation of N6-(dimethylallyl)adenosine (i(6)A). This is tRNA dimethylallyltransferase from Limosilactobacillus reuteri (strain DSM 20016) (Lactobacillus reuteri).